Consider the following 93-residue polypeptide: Small ribosomal subunit protein bS18 (93 aa).

The protein belongs to the bacterial ribosomal protein bS18 family. Part of the 30S ribosomal subunit. Forms a tight heterodimer with protein bS6.

Binds as a heterodimer with protein bS6 to the central domain of the 16S rRNA, where it helps stabilize the platform of the 30S subunit. The protein is Small ribosomal subunit protein bS18 of Paracidovorax citrulli (strain AAC00-1) (Acidovorax citrulli).